Consider the following 1202-residue polypeptide: Stress response protein NST1 (1202 aa).

7 disordered regions span residues 28 to 217 (RHLN…EDDA), 236 to 291 (GHYQ…SGSK), 390 to 423 (RSAP…DDEE), 487 to 543 (AHPS…RMEE), 579 to 852 (ELEE…SMLP), 904 to 967 (PNQA…DSDV), and 979 to 1015 (LLDE…DAPN). A compositionally biased stretch (basic and acidic residues) spans 158–167 (REKEAAKKAA). Polar residues predominate over residues 178–187 (NGVSSGSTHL). Acidic residues predominate over residues 204–217 (PELDDPQYDDEDDA). The segment covering 252-261 (KKPRKKKKGA) has biased composition (basic residues). Composition is skewed to acidic residues over residues 408 to 423 (YDDE…DDEE) and 504 to 536 (PEEE…EAMT). Residues 557–704 (EQRVLQAYRE…EKKVKDDAKR (148 aa)) adopt a coiled-coil conformation. Positions 579–710 (ELEEENEKKD…DAKRKERDRA (132 aa)) are enriched in basic and acidic residues. Residues 754–789 (RPRQTSRQGSHGSSPKTPQVAPGTSKSMSPTSQAQG) are compositionally biased toward polar residues. Over residues 816–828 (SPMPPIGPPPGLS) the composition is skewed to pro residues. Residues 830 to 848 (PPGLSMGLPPGLNGFPGPG) show a composition bias toward low complexity. A compositionally biased stretch (polar residues) spans 916 to 926 (TQHSRQGSGSF). The segment covering 954–967 (KPHDSNKHGQDSDV) has biased composition (basic and acidic residues).

Belongs to the NST1 family.

The protein resides in the cytoplasm. May act as a negative regulator of salt tolerance. The polypeptide is Stress response protein NST1 (NST1) (Phaeosphaeria nodorum (strain SN15 / ATCC MYA-4574 / FGSC 10173) (Glume blotch fungus)).